A 4334-amino-acid chain; its full sequence is Cytoplasmic dynein 2 heavy chain 1 (4334 aa).

The segment at 1-1704 is stem; the sequence is MSSDSRKTFV…KVAMAEATFD (1704 aa). 150–157 is an ATP binding site; that stretch reads LGTAVRKG. Residues 1026 to 1097 are a coiled coil; that stretch reads QEAKGLTAKL…AHLEEQKGNL (72 aa). AAA stretches follow at residues 1705–1929, 1996–2211, 2299–2544, and 2641–2882; these read YTWE…VLGI, KALA…KAFQ, GMDE…WING, and GYER…SSGS. ATP is bound by residues 1743–1750, 2034–2041, 2334–2341, and 2679–2686; these read GPAGTGKT, GPSGSGKS, GPEGCGKG, and GNSGVGRR. Positions 2897–3185 are stalk; sequence QIYNRKRTQV…ISVDKAESVL (289 aa). 2 coiled-coil regions span residues 2930 to 2998 and 3120 to 3199; these read LSAE…SEVQ and ERVS…RGEK. AAA regions lie at residues 3260 to 3492 and 3701 to 3917; these read LSSE…TVEK and MSSF…VITL.

It belongs to the dynein heavy chain family. As to quaternary structure, the cytoplasmic dynein complex 2 is probably composed by a DHC1B homodimer and a number of D1BLIC light intermediate chains. Interacts with FAP133, FLA10 and LC8.

The protein localises to the cytoplasm. It is found in the cytoskeleton. The protein resides in the flagellum basal body. Its subcellular location is the cell projection. It localises to the cilium. The protein localises to the flagellum membrane. May function as a motor for intraflagellar retrograde transport. Functions in flagellar biogenesis. The protein is Cytoplasmic dynein 2 heavy chain 1 (DHC1B) of Chlamydomonas reinhardtii (Chlamydomonas smithii).